A 486-amino-acid chain; its full sequence is Maintenance of mitochondrial morphology protein 1 (486 aa).

At 1 to 19 (MSNDTSAQPAQSSLSFTQG) the chain is on the lumenal side. The chain crosses the membrane as a helical span at residues 20 to 40 (LLVGQLSVVLLIGAFIKFFIF). Over 41–486 (GEASPSSSRS…GSLPDVVPVT (446 aa)) the chain is Cytoplasmic. 4 disordered regions span residues 45 to 98 (PSSS…RSIL), 269 to 318 (QTST…AGTT), 393 to 412 (VRGQ…GVST), and 420 to 486 (ARDA…VPVT). The segment covering 51-61 (QTRRTSPHKRS) has biased composition (basic residues). Basic and acidic residues predominate over residues 70 to 79 (LGSRSLKEKP). Polar residues-rich tracts occupy residues 80–96 (SSNV…NTRS), 269–291 (QTST…NDYS), 307–318 (EQATQANNAGTT), and 401–412 (EVGSSGNAGVST). One can recognise an SMP-LTD domain in the interval 125 to 382 (QPESLDWFNV…EPRVQVVALP (258 aa)). Basic and acidic residues-rich tracts occupy residues 429 to 440 (HATRDADMEGLR) and 462 to 473 (DSREQACRDDPF).

It belongs to the MMM1 family. Homodimer. Component of the ER-mitochondria encounter structure (ERMES) or MDM complex, composed of MMM1, MDM10, MDM12 and MDM34. An MMM1 homodimer associates with one molecule of MDM12 on each side in a pairwise head-to-tail manner, and the SMP-LTD domains of MMM1 and MDM12 generate a continuous hydrophobic tunnel for phospholipid trafficking.

The protein localises to the endoplasmic reticulum membrane. In terms of biological role, component of the ERMES/MDM complex, which serves as a molecular tether to connect the endoplasmic reticulum (ER) and mitochondria. Components of this complex are involved in the control of mitochondrial shape and protein biogenesis, and function in nonvesicular lipid trafficking between the ER and mitochondria. The MDM12-MMM1 subcomplex functions in the major beta-barrel assembly pathway that is responsible for biogenesis of all outer membrane beta-barrel proteins, and acts in a late step after the SAM complex. The MDM10-MDM12-MMM1 subcomplex further acts in the TOM40-specific pathway after the action of the MDM12-MMM1 complex. Essential for establishing and maintaining the structure of mitochondria and maintenance of mtDNA nucleoids. The chain is Maintenance of mitochondrial morphology protein 1 from Coccidioides immitis (strain RS) (Valley fever fungus).